We begin with the raw amino-acid sequence, 279 residues long: Aspartate/glutamate leucyltransferase (279 aa).

The segment at 245 to 279 is disordered; the sequence is ARERGARPPRGPGALKDACDLPLSDAQPADIEDLD.

Belongs to the R-transferase family. Bpt subfamily.

The protein localises to the cytoplasm. It catalyses the reaction N-terminal L-glutamyl-[protein] + L-leucyl-tRNA(Leu) = N-terminal L-leucyl-L-glutamyl-[protein] + tRNA(Leu) + H(+). It carries out the reaction N-terminal L-aspartyl-[protein] + L-leucyl-tRNA(Leu) = N-terminal L-leucyl-L-aspartyl-[protein] + tRNA(Leu) + H(+). In terms of biological role, functions in the N-end rule pathway of protein degradation where it conjugates Leu from its aminoacyl-tRNA to the N-termini of proteins containing an N-terminal aspartate or glutamate. The protein is Aspartate/glutamate leucyltransferase of Caulobacter vibrioides (strain ATCC 19089 / CIP 103742 / CB 15) (Caulobacter crescentus).